Consider the following 267-residue polypeptide: Dynein axonemal assembly factor 19 homolog (267 aa).

2 disordered regions span residues isoleucine 86–arginine 111 and histidine 226–cysteine 250.

The protein belongs to the DNAAF19/PR46b family. In terms of assembly, homodimer.

Its subcellular location is the cytoplasm. The protein localises to the cell projection. It is found in the cilium. The protein resides in the flagellum. Its function is as follows. Dynein-attachment factor required for cilia motility. The chain is Dynein axonemal assembly factor 19 homolog (PR46b) from Chlamydomonas reinhardtii (Chlamydomonas smithii).